The chain runs to 216 residues: Probable inactive E3 ubiquitin-protein ligase SINAT6 (216 aa).

The segment at 5–74 (INDLQVESRV…LLLHLRNDHN (70 aa)) adopts an SIAH-type zinc-finger fold.

It belongs to the SINA (Seven in absentia) family. Homodimer. Interacts with SINAT1, SINAT2, SINAT3, SINAT4 and SINAT5. Interacts with ATG6 and TRAF1A. Expressed in roots, rosette leaves, cauline leaves, guard cells and flowers.

It localises to the cytoplasm. The protein localises to the nucleus. Functionally, probable inactive E3 ubiquitin-protein ligase that plays a role in regulation of autophagy. Upon starvation, involved in maintaining ATG6 homeostasis by competitively associating with ATG6, a component of the autophagosome complex. Acts as a positive regulator of drought stress response. Functions as a positive regulator of abscisic acid-mediated stomatal closure. The protein is Probable inactive E3 ubiquitin-protein ligase SINAT6 of Arabidopsis thaliana (Mouse-ear cress).